The primary structure comprises 343 residues: N-acetyl-gamma-glutamyl-phosphate reductase (343 aa).

C147 is a catalytic residue.

It belongs to the NAGSA dehydrogenase family. Type 1 subfamily.

The protein resides in the cytoplasm. It catalyses the reaction N-acetyl-L-glutamate 5-semialdehyde + phosphate + NADP(+) = N-acetyl-L-glutamyl 5-phosphate + NADPH + H(+). It participates in amino-acid biosynthesis; L-arginine biosynthesis; N(2)-acetyl-L-ornithine from L-glutamate: step 3/4. Its function is as follows. Catalyzes the NADPH-dependent reduction of N-acetyl-5-glutamyl phosphate to yield N-acetyl-L-glutamate 5-semialdehyde. This chain is N-acetyl-gamma-glutamyl-phosphate reductase, found in Staphylococcus aureus (strain USA300).